We begin with the raw amino-acid sequence, 195 residues long: Imidazoleglycerol-phosphate dehydratase (195 aa).

It belongs to the imidazoleglycerol-phosphate dehydratase family.

Its subcellular location is the cytoplasm. It catalyses the reaction D-erythro-1-(imidazol-4-yl)glycerol 3-phosphate = 3-(imidazol-4-yl)-2-oxopropyl phosphate + H2O. It participates in amino-acid biosynthesis; L-histidine biosynthesis; L-histidine from 5-phospho-alpha-D-ribose 1-diphosphate: step 6/9. The chain is Imidazoleglycerol-phosphate dehydratase from Paraburkholderia xenovorans (strain LB400).